A 346-amino-acid polypeptide reads, in one-letter code: Dihydroorotase (346 aa).

Positions 13 and 15 each coordinate Zn(2+). Substrate is bound by residues 15 to 17 (HLR) and N41. K99, H136, and H174 together coordinate Zn(2+). K99 carries the N6-carboxylysine modification. Substrate is bound at residue H136. L219 lines the substrate pocket. D247 serves as a coordination point for Zn(2+). D247 is a catalytic residue. Substrate is bound by residues H251 and A263.

It belongs to the metallo-dependent hydrolases superfamily. DHOase family. Class II DHOase subfamily. As to quaternary structure, homodimer. Zn(2+) is required as a cofactor.

It catalyses the reaction (S)-dihydroorotate + H2O = N-carbamoyl-L-aspartate + H(+). Its pathway is pyrimidine metabolism; UMP biosynthesis via de novo pathway; (S)-dihydroorotate from bicarbonate: step 3/3. Functionally, catalyzes the reversible cyclization of carbamoyl aspartate to dihydroorotate. The chain is Dihydroorotase from Chelativorans sp. (strain BNC1).